Here is a 314-residue protein sequence, read N- to C-terminus: tRNA uridine(34) hydroxylase (314 aa).

The Rhodanese domain occupies 135-229 (SDPDTIVIDT…YLEEVPEEES (95 aa)). The active-site Cysteine persulfide intermediate is C189.

This sequence belongs to the TrhO family.

It carries out the reaction uridine(34) in tRNA + AH2 + O2 = 5-hydroxyuridine(34) in tRNA + A + H2O. In terms of biological role, catalyzes oxygen-dependent 5-hydroxyuridine (ho5U) modification at position 34 in tRNAs. The protein is tRNA uridine(34) hydroxylase of Agrobacterium fabrum (strain C58 / ATCC 33970) (Agrobacterium tumefaciens (strain C58)).